The chain runs to 249 residues: Flavin-dependent thymidylate synthase (249 aa).

Residues 8-225 (VKVKLLEYTP…PNLFKYSGPS (218 aa)) form the ThyX domain. FAD contacts are provided by residues S62, 86 to 88 (RHR), and Q94. DUMP contacts are provided by residues 83–86 (QLVR), 94–98 (QQSQR), and R164. Positions 86-96 (RHRIASYSQQS) match the ThyX motif motif. FAD-binding positions include 180 to 182 (NAR) and N186. Residue R191 coordinates dUMP. Catalysis depends on R191, which acts as the Involved in ionization of N3 of dUMP, leading to its activation.

It belongs to the thymidylate synthase ThyX family. Homotetramer. The cofactor is FAD.

It catalyses the reaction dUMP + (6R)-5,10-methylene-5,6,7,8-tetrahydrofolate + NADPH + H(+) = dTMP + (6S)-5,6,7,8-tetrahydrofolate + NADP(+). It functions in the pathway pyrimidine metabolism; dTTP biosynthesis. Its function is as follows. Catalyzes the reductive methylation of 2'-deoxyuridine-5'-monophosphate (dUMP) to 2'-deoxythymidine-5'-monophosphate (dTMP) while utilizing 5,10-methylenetetrahydrofolate (mTHF) as the methyl donor, and NADPH and FADH(2) as the reductant. The sequence is that of Flavin-dependent thymidylate synthase from Clostridium tetani (strain Massachusetts / E88).